Here is an 898-residue protein sequence, read N- to C-terminus: Phosphoenolpyruvate carboxylase (898 aa).

Residues His134 and Lys564 contribute to the active site.

Belongs to the PEPCase type 1 family. It depends on Mg(2+) as a cofactor.

The catalysed reaction is oxaloacetate + phosphate = phosphoenolpyruvate + hydrogencarbonate. Its function is as follows. Forms oxaloacetate, a four-carbon dicarboxylic acid source for the tricarboxylic acid cycle. This Chromobacterium violaceum (strain ATCC 12472 / DSM 30191 / JCM 1249 / CCUG 213 / NBRC 12614 / NCIMB 9131 / NCTC 9757 / MK) protein is Phosphoenolpyruvate carboxylase.